Reading from the N-terminus, the 100-residue chain is Putative pterin-4-alpha-carbinolamine dehydratase (100 aa).

Belongs to the pterin-4-alpha-carbinolamine dehydratase family.

It carries out the reaction (4aS,6R)-4a-hydroxy-L-erythro-5,6,7,8-tetrahydrobiopterin = (6R)-L-erythro-6,7-dihydrobiopterin + H2O. This Afipia carboxidovorans (strain ATCC 49405 / DSM 1227 / KCTC 32145 / OM5) (Oligotropha carboxidovorans) protein is Putative pterin-4-alpha-carbinolamine dehydratase.